The primary structure comprises 335 residues: MTKHATHAAPQRVLFVHAHPDDESLFTGLLVSASSRVGAETSVLTCTLGEEGEVIGEKYQNLTSEHSDLLGGFRIGELQQALEHLGVHQGPQFLGGPSRWRDSGMADTPTIRHPRAFAGDSEDNWELQVEQLLAVLRRERPEVLVTYGPDGGYGHPDHIRAHRVTHEAVRRLVDAGEEAAPHEIWWAVTPAGAFHAAMTGVEIPEGWREAEDGDVALVAEEFIDAFVQGTPEDVAAKRKAMAAHATQLWVADGTRTDVNPEARDTTTPTGEYLFALSNLISQPILPVEGYQLGWVKNADPNTNRQISLLHFDFVVPSNGTAQEHGNDGKVRGENG.

3 residues coordinate Zn(2+): histidine 19, aspartate 22, and histidine 158.

Belongs to the MshB deacetylase family. Zn(2+) serves as cofactor.

The enzyme catalyses 1D-myo-inositol 2-acetamido-2-deoxy-alpha-D-glucopyranoside + H2O = 1D-myo-inositol 2-amino-2-deoxy-alpha-D-glucopyranoside + acetate. Its function is as follows. Catalyzes the deacetylation of 1D-myo-inositol 2-acetamido-2-deoxy-alpha-D-glucopyranoside (GlcNAc-Ins) in the mycothiol biosynthesis pathway. The protein is 1D-myo-inositol 2-acetamido-2-deoxy-alpha-D-glucopyranoside deacetylase of Corynebacterium urealyticum (strain ATCC 43042 / DSM 7109).